The chain runs to 544 residues: Chaperonin GroEL (544 aa).

Residues 30–33 (TLGP), Lys51, 87–91 (DGTTT), Gly415, 479–481 (NAA), and Asp495 contribute to the ATP site.

The protein belongs to the chaperonin (HSP60) family. In terms of assembly, forms a cylinder of 14 subunits composed of two heptameric rings stacked back-to-back. Interacts with the co-chaperonin GroES.

Its subcellular location is the cytoplasm. It carries out the reaction ATP + H2O + a folded polypeptide = ADP + phosphate + an unfolded polypeptide.. Its function is as follows. Together with its co-chaperonin GroES, plays an essential role in assisting protein folding. The GroEL-GroES system forms a nano-cage that allows encapsulation of the non-native substrate proteins and provides a physical environment optimized to promote and accelerate protein folding. This chain is Chaperonin GroEL, found in Francisella tularensis subsp. novicida (strain U112).